Consider the following 97-residue polypeptide: Venom peptide HsVx1 (97 aa).

A signal peptide spans 1 to 20; the sequence is MSHLRIAVTFLCTLFALTAG.

This sequence belongs to the scorpion La1-like peptide family. In terms of processing, contains 4 disulfide bonds. In terms of tissue distribution, expressed by the venom gland.

It localises to the secreted. The polypeptide is Venom peptide HsVx1 (Heterometrus spinifer (Asia giant forest scorpion)).